Consider the following 287-residue polypeptide: MAIIVDERTKVVVQGITGYQGKFHTERMLNYGTKIVAGVTPGKGGTEVLGVPVYDSVKEAVREADANASVIFVPAPFAADAVMEAADAGIKVIVCITEGIPVHDELKMYWRVKEAGATLIGPNCPGIISPGKTHLGIMPVQIFKPGNVGIVSRSGTLTYQIAYNLTKLGLGQSTVVGIGGDRIIGTDFVEVLRLFEDDKETKAVVLVGEIGGRDEEVAAEFIREMSKPVVGYVAGLTAPPGKRMGHAGAIIEGGVGTAESKIKALEAAGARVGKTPMEVAELVAEIL.

CoA contacts are provided by residues 17-20, Lys43, and 96-98; these read TGYQ and ITE. Substrate is bound at residue Tyr159. The Tele-phosphohistidine intermediate role is filled by His246.

Belongs to the succinate/malate CoA ligase alpha subunit family. Heterotetramer of two alpha and two beta subunits.

It catalyses the reaction succinate + ATP + CoA = succinyl-CoA + ADP + phosphate. The enzyme catalyses GTP + succinate + CoA = succinyl-CoA + GDP + phosphate. It functions in the pathway carbohydrate metabolism; tricarboxylic acid cycle; succinate from succinyl-CoA (ligase route): step 1/1. Functionally, succinyl-CoA synthetase functions in the citric acid cycle (TCA), coupling the hydrolysis of succinyl-CoA to the synthesis of either ATP or GTP and thus represents the only step of substrate-level phosphorylation in the TCA. The alpha subunit of the enzyme binds the substrates coenzyme A and phosphate, while succinate binding and nucleotide specificity is provided by the beta subunit. This Archaeoglobus fulgidus (strain ATCC 49558 / DSM 4304 / JCM 9628 / NBRC 100126 / VC-16) protein is Succinate--CoA ligase [ADP-forming] subunit alpha 2.